Here is a 617-residue protein sequence, read N- to C-terminus: Tetratricopeptide repeat protein 39B (617 aa).

TPR repeat units follow at residues 328-361 (SLILFYHARIELLKGNAEKAQETFRKCISVQEEW) and 561-594 (PFTLFELAFLYKSQGEIDKAIKVLETARNNYKDY).

It belongs to the TTC39 family.

Regulates high density lipoprotein (HDL) cholesterol metabolism by promoting the ubiquitination and degradation of the oxysterols receptors LXR (NR1H2 and NR1H3). This is Tetratricopeptide repeat protein 39B (Ttc39b) from Rattus norvegicus (Rat).